A 292-amino-acid chain; its full sequence is Ribosomal protein L11 methyltransferase (292 aa).

S-adenosyl-L-methionine contacts are provided by Thr-144, Gly-165, Asp-187, and Asn-229.

It belongs to the methyltransferase superfamily. PrmA family.

The protein resides in the cytoplasm. It carries out the reaction L-lysyl-[protein] + 3 S-adenosyl-L-methionine = N(6),N(6),N(6)-trimethyl-L-lysyl-[protein] + 3 S-adenosyl-L-homocysteine + 3 H(+). Methylates ribosomal protein L11. In Pseudomonas fluorescens (strain SBW25), this protein is Ribosomal protein L11 methyltransferase.